Consider the following 104-residue polypeptide: MSAIQGIEGVISQLQTTAMSARAQESLPQPTISFAGQLHAALDRISDTQTAARTQAEKFTLGEPGVALNDVMTDMQKASVSMQMGIQVRNKLVAAYQEVMSMQV.

Belongs to the FliE family.

It is found in the bacterial flagellum basal body. The chain is Flagellar hook-basal body complex protein FliE from Escherichia coli (strain 55989 / EAEC).